We begin with the raw amino-acid sequence, 201 residues long: Small ribosomal subunit protein uS4c (201 aa).

Residues 19-38 are disordered; that stretch reads PGLTSKSPKAGSDLRNQLRS. Residues 89-149 enclose the S4 RNA-binding domain; that stretch reads MRLDNILFRL…DEQKSRALIQ (61 aa).

This sequence belongs to the universal ribosomal protein uS4 family. As to quaternary structure, part of the 30S ribosomal subunit. Contacts protein S5. The interaction surface between S4 and S5 is involved in control of translational fidelity.

Its subcellular location is the plastid. The protein resides in the chloroplast. Its function is as follows. One of the primary rRNA binding proteins, it binds directly to 16S rRNA where it nucleates assembly of the body of the 30S subunit. In terms of biological role, with S5 and S12 plays an important role in translational accuracy. The chain is Small ribosomal subunit protein uS4c (rps4) from Platanus occidentalis (Sycamore).